We begin with the raw amino-acid sequence, 158 residues long: 6,7-dimethyl-8-ribityllumazine synthase (158 aa).

Residues Phe22, 57-59, and 81-83 each bind 5-amino-6-(D-ribitylamino)uracil; these read AVE and AVI. 86–87 contacts (2S)-2-hydroxy-3-oxobutyl phosphate; the sequence is GT. The active-site Proton donor is His89. Phe114 serves as a coordination point for 5-amino-6-(D-ribitylamino)uracil. Arg128 contacts (2S)-2-hydroxy-3-oxobutyl phosphate.

It belongs to the DMRL synthase family. In terms of assembly, forms an icosahedral capsid composed of 60 subunits, arranged as a dodecamer of pentamers.

The enzyme catalyses (2S)-2-hydroxy-3-oxobutyl phosphate + 5-amino-6-(D-ribitylamino)uracil = 6,7-dimethyl-8-(1-D-ribityl)lumazine + phosphate + 2 H2O + H(+). The protein operates within cofactor biosynthesis; riboflavin biosynthesis; riboflavin from 2-hydroxy-3-oxobutyl phosphate and 5-amino-6-(D-ribitylamino)uracil: step 1/2. Functionally, catalyzes the formation of 6,7-dimethyl-8-ribityllumazine by condensation of 5-amino-6-(D-ribitylamino)uracil with 3,4-dihydroxy-2-butanone 4-phosphate. This is the penultimate step in the biosynthesis of riboflavin. The chain is 6,7-dimethyl-8-ribityllumazine synthase from Shewanella oneidensis (strain ATCC 700550 / JCM 31522 / CIP 106686 / LMG 19005 / NCIMB 14063 / MR-1).